The following is a 554-amino-acid chain: Hyaluronan synthase 3 (554 aa).

Topologically, residues 1-15 (MPVQLTTALRVVGTS) are cytoplasmic. The helical transmembrane segment at 16–36 (LFALVVLGGILAAYVTGYQFI) threads the bilayer. The Extracellular portion of the chain corresponds to 37-44 (HTEKHYLS). A helical membrane pass occupies residues 45-65 (FGLYGAILGLHLLIQSLFAFL). The Cytoplasmic segment spans residues 66-378 (EHRRMRRAGR…NSLWFHKHHL (313 aa)). A helical membrane pass occupies residues 379–399 (WMTYESVVTGFFPFFLIATVI). Residues 400–409 (QLFYRGRIWN) lie on the Extracellular side of the membrane. Residues 410-430 (ILLFLLTVQLVGIIKATYACF) traverse the membrane as a helical segment. Topologically, residues 431–441 (LRGNAEMIFMS) are cytoplasmic. Residues 442 to 462 (LYSLLYMSSLLPAKIFAIATI) form a helical membrane-spanning segment. N-linked (GlcNAc...) asparagine glycosylation is present at Asn-463. Over 463–474 (NKSGWGTSGRKT) the chain is Extracellular. The chain crosses the membrane as a helical span at residues 475–495 (IVVNFIGLIPVSIWVAVLLGG). Residues 496–516 (LAYTAYCQDLFSETELAFLVS) are Cytoplasmic-facing. Residues 517 to 537 (GAILYGCYWVALLMLYLAIIA) form a helical membrane-spanning segment. Topologically, residues 538-554 (RRCGKKPEQYSLAFAEV) are extracellular.

It belongs to the NodC/HAS family. The cofactor is Mg(2+). In terms of processing, O-GlcNAcylation increases the hyaluronan synthase activity, HAS3 stability and its plasma membrane residence. The concentration of UDP-GlcNAc controls the level of O-GlcNAc modification.

The protein resides in the cell membrane. Its subcellular location is the golgi apparatus membrane. It is found in the golgi apparatus. It localises to the trans-Golgi network membrane. The protein localises to the cytoplasmic vesicle. It carries out the reaction [hyaluronan](n) + UDP-N-acetyl-alpha-D-glucosamine = N-acetyl-beta-D-glucosaminyl-(1-&gt;4)-[hyaluronan](n) + UDP + H(+). The catalysed reaction is N-acetyl-beta-D-glucosaminyl-(1-&gt;4)-[hyaluronan](n) + UDP-alpha-D-glucuronate = [hyaluronan](n+1) + UDP + H(+). The protein operates within glycan biosynthesis; hyaluronan biosynthesis. Its function is as follows. Catalyzes the addition of GlcNAc or GlcUA monosaccharides to the nascent hyaluronan polymer. Therefore, it is essential to hyaluronan synthesis a major component of most extracellular matrices that has a structural role in tissues architectures and regulates cell adhesion, migration and differentiation. This is one of three isoenzymes responsible for cellular hyaluronan synthesis. This chain is Hyaluronan synthase 3 (Has3), found in Mus musculus (Mouse).